A 489-amino-acid chain; its full sequence is Serine/threonine-protein kinase BSK3 (489 aa).

Glycine 2 carries the N-myristoyl glycine lipid modification. The Protein kinase domain occupies 58 to 324 (EYIVSEHGEK…ETEVLSHVLM (267 aa)). ATP is bound by residues 64–72 (HGEKAPNVV) and lysine 86. The Proton acceptor role is filled by aspartate 180. Residue serine 212 is modified to Phosphoserine.

This sequence belongs to the protein kinase superfamily. Ser/Thr protein kinase family. As to quaternary structure, interacts with BRI1. Phosphorylated by BRI1 upon brassinolide (BL) treatment. Phosphorylated by ASK7/BIN2 and ASK9/BIL2.

It localises to the cell membrane. It catalyses the reaction L-seryl-[protein] + ATP = O-phospho-L-seryl-[protein] + ADP + H(+). The catalysed reaction is L-threonyl-[protein] + ATP = O-phospho-L-threonyl-[protein] + ADP + H(+). Probable serine/threonine kinase that acts as a positive regulator of brassinosteroid (BR) signaling downstream of the receptor kinase BRI1. Mediates signal transduction from BRI1 by functioning as substrate of BRI1. Functions redundantly with BSK4, BSK6, BSK7 and BSK8. The protein is Serine/threonine-protein kinase BSK3 of Arabidopsis thaliana (Mouse-ear cress).